Reading from the N-terminus, the 362-residue chain is Class I histocompatibility antigen, Gogo-OKO alpha chain (362 aa).

A signal peptide spans Met1–Ala24. Positions Gly25–Gly114 are alpha-1. Residues Gly25–Ile308 are Extracellular-facing. Asn110 is a glycosylation site (N-linked (GlcNAc...) asparagine). Residues Gly115–Thr206 form an alpha-2 region. Intrachain disulfides connect Cys125–Cys188 and Cys227–Cys283. The interval Asp207 to Trp298 is alpha-3. The Ig-like C1-type domain occupies Pro209–Thr295. A connecting peptide region spans residues Glu299–Ile308. Residues Val309 to Trp332 traverse the membrane as a helical segment. The Cytoplasmic segment spans residues Arg333–Ala362. A disordered region spans residues Ser337–Ala362. The segment covering Gly342–Ala362 has biased composition (low complexity).

This sequence belongs to the MHC class I family. Heterodimer of an alpha chain and a beta chain (beta-2-microglobulin).

The protein resides in the membrane. Involved in the presentation of foreign antigens to the immune system. The sequence is that of Class I histocompatibility antigen, Gogo-OKO alpha chain from Gorilla gorilla gorilla (Western lowland gorilla).